Reading from the N-terminus, the 214-residue chain is Small ribosomal subunit protein uS5 (214 aa).

An S5 DRBM domain is found at 54–117 (LKYEVMDIKI…KNAKMNIIPV (64 aa)).

This sequence belongs to the universal ribosomal protein uS5 family. As to quaternary structure, part of the 30S ribosomal subunit. Contacts protein S4.

Its function is as follows. With S4 and S12 plays an important role in translational accuracy. The chain is Small ribosomal subunit protein uS5 from Sulfurisphaera tokodaii (strain DSM 16993 / JCM 10545 / NBRC 100140 / 7) (Sulfolobus tokodaii).